A 65-amino-acid polypeptide reads, in one-letter code: Photosystem II reaction center protein Z (65 aa).

The next 2 helical transmembrane spans lie at 11–31 (LVLA…VIFA) and 44–64 (WLAC…DGIF).

This sequence belongs to the PsbZ family. As to quaternary structure, PSII is composed of 1 copy each of membrane proteins PsbA, PsbB, PsbC, PsbD, PsbE, PsbF, PsbH, PsbI, PsbJ, PsbK, PsbL, PsbM, PsbT, PsbY, PsbZ, Psb30/Ycf12, at least 3 peripheral proteins of the oxygen-evolving complex and a large number of cofactors. It forms dimeric complexes.

The protein resides in the plastid. Its subcellular location is the chloroplast thylakoid membrane. Functionally, may control the interaction of photosystem II (PSII) cores with the light-harvesting antenna, regulates electron flow through the 2 photosystem reaction centers. PSII is a light-driven water plastoquinone oxidoreductase, using light energy to abstract electrons from H(2)O, generating a proton gradient subsequently used for ATP formation. In Euglena gracilis, this protein is Photosystem II reaction center protein Z.